Consider the following 484-residue polypeptide: Cobyric acid synthase (484 aa).

One can recognise a GATase cobBQ-type domain in the interval 253–430; the sequence is SLRVAVVRFP…WHGAFEHDEF (178 aa). Residue Cys-334 is the Nucleophile of the active site. His-422 is an active-site residue.

Belongs to the CobB/CobQ family. CobQ subfamily.

Its pathway is cofactor biosynthesis; adenosylcobalamin biosynthesis. Functionally, catalyzes amidations at positions B, D, E, and G on adenosylcobyrinic A,C-diamide. NH(2) groups are provided by glutamine, and one molecule of ATP is hydrogenolyzed for each amidation. The chain is Cobyric acid synthase from Cutibacterium acnes (strain DSM 16379 / KPA171202) (Propionibacterium acnes).